The following is a 200-amino-acid chain: Nucleoside triphosphate pyrophosphatase (200 aa).

Asp75 acts as the Proton acceptor in catalysis.

It belongs to the Maf family. Requires a divalent metal cation as cofactor.

The protein localises to the cytoplasm. The enzyme catalyses a ribonucleoside 5'-triphosphate + H2O = a ribonucleoside 5'-phosphate + diphosphate + H(+). It catalyses the reaction a 2'-deoxyribonucleoside 5'-triphosphate + H2O = a 2'-deoxyribonucleoside 5'-phosphate + diphosphate + H(+). Its function is as follows. Nucleoside triphosphate pyrophosphatase. May have a dual role in cell division arrest and in preventing the incorporation of modified nucleotides into cellular nucleic acids. The protein is Nucleoside triphosphate pyrophosphatase of Synechococcus sp. (strain CC9311).